Here is a 316-residue protein sequence, read N- to C-terminus: Lipoyl synthase (316 aa).

Residues Cys-60, Cys-65, Cys-71, Cys-86, Cys-90, Cys-93, and Ser-297 each coordinate [4Fe-4S] cluster. The Radical SAM core domain maps to 72–286 (WEDREATFLI…KDEADEVGFT (215 aa)).

This sequence belongs to the radical SAM superfamily. Lipoyl synthase family. It depends on [4Fe-4S] cluster as a cofactor.

It is found in the cytoplasm. The catalysed reaction is [[Fe-S] cluster scaffold protein carrying a second [4Fe-4S](2+) cluster] + N(6)-octanoyl-L-lysyl-[protein] + 2 oxidized [2Fe-2S]-[ferredoxin] + 2 S-adenosyl-L-methionine + 4 H(+) = [[Fe-S] cluster scaffold protein] + N(6)-[(R)-dihydrolipoyl]-L-lysyl-[protein] + 4 Fe(3+) + 2 hydrogen sulfide + 2 5'-deoxyadenosine + 2 L-methionine + 2 reduced [2Fe-2S]-[ferredoxin]. Its pathway is protein modification; protein lipoylation via endogenous pathway; protein N(6)-(lipoyl)lysine from octanoyl-[acyl-carrier-protein]: step 2/2. In terms of biological role, catalyzes the radical-mediated insertion of two sulfur atoms into the C-6 and C-8 positions of the octanoyl moiety bound to the lipoyl domains of lipoate-dependent enzymes, thereby converting the octanoylated domains into lipoylated derivatives. The chain is Lipoyl synthase from Nocardioides sp. (strain ATCC BAA-499 / JS614).